Reading from the N-terminus, the 327-residue chain is Zinc transport protein ZntB (327 aa).

The Cytoplasmic segment spans residues 1–273 (MDAIKGSELQ…ARRTYTMSLM (273 aa)). Residues 274 to 294 (AMVFLPSTFLTGLFGVNLGGI) traverse the membrane as a helical segment. Over 295–300 (PGNSWH) the chain is Periplasmic. The helical transmembrane segment at 301–321 (LGFSLFCLMLVVVIGGVAWWL) threads the bilayer. At 322–327 (HRSKWL) the chain is on the cytoplasmic side.

The protein belongs to the CorA metal ion transporter (MIT) (TC 1.A.35) family.

It localises to the cell inner membrane. The catalysed reaction is Zn(2+)(out) + H(+)(out) = Zn(2+)(in) + H(+)(in). Functionally, zinc transporter. Acts as a Zn(2+):proton symporter, which likely mediates zinc ion uptake. The protein is Zinc transport protein ZntB of Klebsiella pneumoniae subsp. pneumoniae (strain ATCC 700721 / MGH 78578).